Reading from the N-terminus, the 483-residue chain is Regulatory protein ViaA (483 aa).

The protein belongs to the ViaA family. Homodimer. Interacts with RavA.

It is found in the cytoplasm. Functionally, component of the RavA-ViaA chaperone complex, which may act on the membrane to optimize the function of some of the respiratory chains. ViaA stimulates the ATPase activity of RavA. This Escherichia coli O9:H4 (strain HS) protein is Regulatory protein ViaA.